The following is a 429-amino-acid chain: Phosphoribosylamine--glycine ligase (429 aa).

The 208-residue stretch at lysine 108–alanine 315 folds into the ATP-grasp domain. An ATP-binding site is contributed by leucine 134–serine 195. The Mg(2+) site is built by glutamate 285 and asparagine 287.

Belongs to the GARS family. The cofactor is Mg(2+). Mn(2+) is required as a cofactor.

The enzyme catalyses 5-phospho-beta-D-ribosylamine + glycine + ATP = N(1)-(5-phospho-beta-D-ribosyl)glycinamide + ADP + phosphate + H(+). It functions in the pathway purine metabolism; IMP biosynthesis via de novo pathway; N(1)-(5-phospho-D-ribosyl)glycinamide from 5-phospho-alpha-D-ribose 1-diphosphate: step 2/2. This is Phosphoribosylamine--glycine ligase from Pseudomonas aeruginosa (strain ATCC 15692 / DSM 22644 / CIP 104116 / JCM 14847 / LMG 12228 / 1C / PRS 101 / PAO1).